The primary structure comprises 391 residues: MAATCEISNVFSNYFNAMYSSEDPTLAPAPPTTFGTEDLVLTLNNQQMTLEGPGPQTRSQRDRTDPLAVLHLAEKASWTSERPQFWSKTQVLEWISYQVEKNKYDASSIDFSRCDMDGATLCSCALEELRLVFGPLGDQLHAQLRDLTSNSSDELSWIIELLEKDGMSFQESLGDSGPFDQGSPFAQELLDDGRQASPYYCSTYGPGAPSPGSSDVSTARTATPQSSHASDSGGSDVDLDLTESKVFPRDGFPDYKKGEPKHGKRKRGRPRKLSKEYWDCLEGKKSKHAPRGTHLWEFIRDILIHPELNEGLMKWENRHEGVFKFLRSEAVAQLWGQKKKNSNMTYEKLSRAMRYYYKREILERVDGRRLVYKFGKNSSGWKEEEVGESRN.

Residues 65–151 enclose the PNT domain; the sequence is DPLAVLHLAE…AQLRDLTSNS (87 aa). The interval 200–271 is disordered; the sequence is YCSTYGPGAP…HGKRKRGRPR (72 aa). Residues 211–229 show a composition bias toward polar residues; it reads PGSSDVSTARTATPQSSHA. Over residues 242-261 the composition is skewed to basic and acidic residues; it reads TESKVFPRDGFPDYKKGEPK. The span at 262–271 shows a compositional bias: basic residues; that stretch reads HGKRKRGRPR. The ETS DNA-binding region spans 293 to 375; the sequence is THLWEFIRDI…DGRRLVYKFG (83 aa).

It belongs to the ETS family. As to quaternary structure, interacts with TBP. Interacts with CREBBP and EP300; these act as transcriptional coactivators of ELF3 and positively modulate its function. Interacts with XRCC5/KU86 and XRCC6/KU70; these inhibit the ability of ELF3 to bind DNA and negatively modulate its transcriptional activity. Associated with CLND7 and POU2F3. Interacts with ZNF768. Expressed in small intestine, colon, lung, kidney and uterus. Also expressed in the corneal epithelium and conjunctiva of the developing and adult eye. Not detected in liver, spleen, thymus, brain, heart, skeletal muscle or ovary.

It is found in the cytoplasm. Its subcellular location is the nucleus. In terms of biological role, transcriptional activator that binds and transactivates ETS sequences containing the consensus nucleotide core sequence GGA[AT]. Acts synergistically with POU2F3 to transactivate the SPRR2A promoter and with RUNX1 to transactivate the ANGPT1 promoter. Also transactivates collagenase, CCL20, CLND7, FLG, KRT8, NOS2, PTGS2, SPRR2B, TGFBR2 and TGM3 promoters. Represses KRT4 promoter activity. Involved in mediating vascular inflammation. May play an important role in epithelial cell differentiation and tumorigenesis. May be a critical downstream effector of the ERBB2 signaling pathway. May be associated with mammary gland development and involution. Plays an important role in the regulation of transcription with TATA-less promoters in preimplantation embryos, which is essential in preimplantation development. This is ETS-related transcription factor Elf-3 from Mus musculus (Mouse).